A 208-amino-acid polypeptide reads, in one-letter code: MAENGLNIVWHSRSLTKADYYDRNGHRPLVVWFTGLSGSGKSTLAHAAEEALFKKGCYTYILDGDNMRHGLNSDLGFSEADRRENIRRIGEVAKLFVDAGIVVLAAFISPYQEDRDRVRALFEPAEFIEIYVKCDLDTCESRDPKGLYRKARAGQLPQFTGIDSPYEEPQAPELVIDTCRLGVEESVAAIIRFVERRSADGGRLTADG.

Residue 35 to 42 coordinates ATP; the sequence is GLSGSGKS. Ser109 acts as the Phosphoserine intermediate in catalysis.

It belongs to the APS kinase family.

It carries out the reaction adenosine 5'-phosphosulfate + ATP = 3'-phosphoadenylyl sulfate + ADP + H(+). Its pathway is sulfur metabolism; hydrogen sulfide biosynthesis; sulfite from sulfate: step 2/3. Catalyzes the synthesis of activated sulfate. The sequence is that of Adenylyl-sulfate kinase from Geotalea uraniireducens (strain Rf4) (Geobacter uraniireducens).